The primary structure comprises 398 residues: S-adenosylmethionine synthase (398 aa).

His-17 lines the ATP pocket. Residue Asp-19 coordinates Mg(2+). Position 45 (Glu-45) interacts with K(+). 2 residues coordinate L-methionine: Glu-58 and Gln-101. Residues 101-111 (QSPDIAQGVDT) form a flexible loop region. ATP is bound by residues 176–178 (DGK), 243–244 (RF), Asp-252, 258–259 (RK), and Lys-279. Residue Asp-252 coordinates L-methionine. Lys-283 lines the L-methionine pocket.

Belongs to the AdoMet synthase family. Homotetramer; dimer of dimers. Requires Mg(2+) as cofactor. K(+) serves as cofactor.

The protein localises to the cytoplasm. It carries out the reaction L-methionine + ATP + H2O = S-adenosyl-L-methionine + phosphate + diphosphate. It participates in amino-acid biosynthesis; S-adenosyl-L-methionine biosynthesis; S-adenosyl-L-methionine from L-methionine: step 1/1. In terms of biological role, catalyzes the formation of S-adenosylmethionine (AdoMet) from methionine and ATP. The overall synthetic reaction is composed of two sequential steps, AdoMet formation and the subsequent tripolyphosphate hydrolysis which occurs prior to release of AdoMet from the enzyme. The protein is S-adenosylmethionine synthase of Staphylococcus saprophyticus subsp. saprophyticus (strain ATCC 15305 / DSM 20229 / NCIMB 8711 / NCTC 7292 / S-41).